Consider the following 101-residue polypeptide: uncharacterized protein (101 aa).

Over residues 1–11 (MSDEGYRELVE) the composition is skewed to basic and acidic residues. A disordered region spans residues 1 to 26 (MSDEGYRELVESKSAPTTPGPWSPDR).

This is an uncharacterized protein from Torque teno canis virus (isolate Cf-TTV10).